The primary structure comprises 305 residues: tRNA dimethylallyltransferase (305 aa).

ATP is bound at residue 8–15 (GPTASGKT). Substrate is bound at residue 10–15 (TASGKT). Residues 33-36 (DSQQ) form an interaction with substrate tRNA region.

This sequence belongs to the IPP transferase family. As to quaternary structure, monomer. Mg(2+) is required as a cofactor.

The enzyme catalyses adenosine(37) in tRNA + dimethylallyl diphosphate = N(6)-dimethylallyladenosine(37) in tRNA + diphosphate. Functionally, catalyzes the transfer of a dimethylallyl group onto the adenine at position 37 in tRNAs that read codons beginning with uridine, leading to the formation of N6-(dimethylallyl)adenosine (i(6)A). The chain is tRNA dimethylallyltransferase from Anaeromyxobacter sp. (strain K).